An 845-amino-acid chain; its full sequence is Protein P (845 aa).

Positions 1 to 179 are terminal protein domain (TP); the sequence is MPLSYQHFRK…FCGSPYSWEQ (179 aa). Residues 180–348 are spacer; that stretch reads ELQHGRLVIK…YCLSHLVNLR (169 aa). The disordered stretch occupies residues 226–246; sequence GLQPHQGPLASSQPGRSGSIR. The segment at 349–692 is polymerase/reverse transcriptase domain (RT); it reads EDRGPCDEHG…YMNLYPVARQ (344 aa). The Reverse transcriptase domain occupies 359–602; sequence EHHIRIPRTP…YSLNFMGYVI (244 aa). Aspartate 431, aspartate 553, and aspartate 554 together coordinate Mg(2+).

The protein belongs to the hepadnaviridae P protein family.

It catalyses the reaction DNA(n) + a 2'-deoxyribonucleoside 5'-triphosphate = DNA(n+1) + diphosphate. The enzyme catalyses Endonucleolytic cleavage to 5'-phosphomonoester.. Activated by host HSP70 and HSP40 in vitro to be able to bind the epsilon loop of the pgRNA. Because deletion of the RNase H region renders the protein partly chaperone-independent, the chaperones may be needed indirectly to relieve occlusion of the RNA-binding site by this domain. Inhibited by several reverse-transcriptase inhibitors: Lamivudine, Adefovir and Entecavir. Functionally, multifunctional enzyme that converts the viral RNA genome into dsDNA in viral cytoplasmic capsids. This enzyme displays a DNA polymerase activity that can copy either DNA or RNA templates, and a ribonuclease H (RNase H) activity that cleaves the RNA strand of RNA-DNA heteroduplexes in a partially processive 3'- to 5'-endonucleasic mode. Neo-synthesized pregenomic RNA (pgRNA) are encapsidated together with the P protein, and reverse-transcribed inside the nucleocapsid. Initiation of reverse-transcription occurs first by binding the epsilon loop on the pgRNA genome, and is initiated by protein priming, thereby the 5'-end of (-)DNA is covalently linked to P protein. Partial (+)DNA is synthesized from the (-)DNA template and generates the relaxed circular DNA (RC-DNA) genome. After budding and infection, the RC-DNA migrates in the nucleus, and is converted into a plasmid-like covalently closed circular DNA (cccDNA). The activity of P protein does not seem to be necessary for cccDNA generation, and is presumably released from (+)DNA by host nuclear DNA repair machinery. The protein is Protein P of Hepatitis B virus genotype A2 subtype adw2 (isolate Germany/991/1990) (HBV-A).